Reading from the N-terminus, the 112-residue chain is Putative pterin-4-alpha-carbinolamine dehydratase (112 aa).

Belongs to the pterin-4-alpha-carbinolamine dehydratase family.

The enzyme catalyses (4aS,6R)-4a-hydroxy-L-erythro-5,6,7,8-tetrahydrobiopterin = (6R)-L-erythro-6,7-dihydrobiopterin + H2O. This is Putative pterin-4-alpha-carbinolamine dehydratase from Shewanella sp. (strain MR-4).